The following is a 486-amino-acid chain: Ribulose bisphosphate carboxylase large chain (486 aa).

The substrate site is built by Asn125 and Thr175. Lys177 acts as the Proton acceptor in catalysis. Lys179 contributes to the substrate binding site. Positions 203, 205, and 206 each coordinate Mg(2+). At Lys203 the chain carries N6-carboxylysine. Residue His295 is the Proton acceptor of the active site. Substrate is bound by residues Arg296, His328, and Ser380.

It belongs to the RuBisCO large chain family. Type I subfamily. Heterohexadecamer of 8 large chains and 8 small chains. Mg(2+) serves as cofactor.

The enzyme catalyses 2 (2R)-3-phosphoglycerate + 2 H(+) = D-ribulose 1,5-bisphosphate + CO2 + H2O. The catalysed reaction is D-ribulose 1,5-bisphosphate + O2 = 2-phosphoglycolate + (2R)-3-phosphoglycerate + 2 H(+). RuBisCO catalyzes two reactions: the carboxylation of D-ribulose 1,5-bisphosphate, the primary event in carbon dioxide fixation, as well as the oxidative fragmentation of the pentose substrate. Both reactions occur simultaneously and in competition at the same active site. This chain is Ribulose bisphosphate carboxylase large chain, found in Afipia carboxidovorans (strain ATCC 49405 / DSM 1227 / KCTC 32145 / OM5) (Oligotropha carboxidovorans).